A 137-amino-acid chain; its full sequence is Drosulfakinins (137 aa).

A signal peptide spans Met1 to Ala31. The propeptide occupies Gln32–Arg74. The residue at position 81 (Phe81) is a Phenylalanine amide. Residues Val85–Ala107 constitute a propeptide that is removed on maturation. Tyr113 carries the post-translational modification Sulfotyrosine. A Phenylalanine amide modification is found at Phe118. Tyr130 is subject to Sulfotyrosine. Phe135 carries the post-translational modification Phenylalanine amide.

The protein belongs to the gastrin/cholecystokinin family.

Its subcellular location is the secreted. Its function is as follows. Drosulfakinin-0 (DSK 0) plays diverse biological roles including regulating gut muscle contraction in adults but not in larvae. The protein is Drosulfakinins of Drosophila yakuba (Fruit fly).